Reading from the N-terminus, the 1343-residue chain is DNA-directed RNA polymerase subunit beta (1343 aa).

Belongs to the RNA polymerase beta chain family. In terms of assembly, the RNAP catalytic core consists of 2 alpha, 1 beta, 1 beta' and 1 omega subunit. When a sigma factor is associated with the core the holoenzyme is formed, which can initiate transcription.

The catalysed reaction is RNA(n) + a ribonucleoside 5'-triphosphate = RNA(n+1) + diphosphate. DNA-dependent RNA polymerase catalyzes the transcription of DNA into RNA using the four ribonucleoside triphosphates as substrates. The protein is DNA-directed RNA polymerase subunit beta of Shewanella loihica (strain ATCC BAA-1088 / PV-4).